The chain runs to 434 residues: Glutamyl-tRNA reductase (434 aa).

Substrate contacts are provided by residues 49-52 (TCNR), Ser107, 112-114 (EPQ), and Gln118. Cys50 acts as the Nucleophile in catalysis. An NADP(+)-binding site is contributed by 187-192 (GAGETV).

The protein belongs to the glutamyl-tRNA reductase family. As to quaternary structure, homodimer.

It catalyses the reaction (S)-4-amino-5-oxopentanoate + tRNA(Glu) + NADP(+) = L-glutamyl-tRNA(Glu) + NADPH + H(+). Its pathway is porphyrin-containing compound metabolism; protoporphyrin-IX biosynthesis; 5-aminolevulinate from L-glutamyl-tRNA(Glu): step 1/2. In terms of biological role, catalyzes the NADPH-dependent reduction of glutamyl-tRNA(Glu) to glutamate 1-semialdehyde (GSA). This chain is Glutamyl-tRNA reductase, found in Hydrogenovibrio crunogenus (strain DSM 25203 / XCL-2) (Thiomicrospira crunogena).